We begin with the raw amino-acid sequence, 477 residues long: Adenylyl cyclase-associated protein 2 (477 aa).

The residue at position 2 (A2) is an N-acetylalanine. Disordered regions lie at residues V224–S261 and T274–P323. Positions G230–L246 are enriched in pro residues. Phosphoserine occurs at positions 301 and 309. The span at S301–K320 shows a compositional bias: low complexity. A C-CAP/cofactor C-like domain is found at P317–I455.

The protein belongs to the CAP family.

The protein resides in the cell membrane. In terms of biological role, involved in the regulation of actin polymerization. This Pongo abelii (Sumatran orangutan) protein is Adenylyl cyclase-associated protein 2 (CAP2).